A 152-amino-acid chain; its full sequence is Xanthine-guanine phosphoribosyltransferase (152 aa).

5-phospho-alpha-D-ribose 1-diphosphate contacts are provided by residues 37-38 (RG) and 88-96 (DDLVDTGNT). Aspartate 89 is a Mg(2+) binding site. Aspartate 92 and isoleucine 135 together coordinate guanine. Residues aspartate 92 and isoleucine 135 each contribute to the xanthine site. GMP is bound by residues 92–96 (DTGNT) and 134–135 (WI).

Belongs to the purine/pyrimidine phosphoribosyltransferase family. XGPT subfamily. In terms of assembly, homotetramer. Requires Mg(2+) as cofactor.

The protein resides in the cell inner membrane. It carries out the reaction GMP + diphosphate = guanine + 5-phospho-alpha-D-ribose 1-diphosphate. The catalysed reaction is XMP + diphosphate = xanthine + 5-phospho-alpha-D-ribose 1-diphosphate. It catalyses the reaction IMP + diphosphate = hypoxanthine + 5-phospho-alpha-D-ribose 1-diphosphate. It functions in the pathway purine metabolism; GMP biosynthesis via salvage pathway; GMP from guanine: step 1/1. It participates in purine metabolism; XMP biosynthesis via salvage pathway; XMP from xanthine: step 1/1. Functionally, purine salvage pathway enzyme that catalyzes the transfer of the ribosyl-5-phosphate group from 5-phospho-alpha-D-ribose 1-diphosphate (PRPP) to the N9 position of the 6-oxopurines guanine and xanthine to form the corresponding ribonucleotides GMP (guanosine 5'-monophosphate) and XMP (xanthosine 5'-monophosphate), with the release of PPi. To a lesser extent, also acts on hypoxanthine. This chain is Xanthine-guanine phosphoribosyltransferase, found in Mannheimia succiniciproducens (strain KCTC 0769BP / MBEL55E).